The chain runs to 348 residues: MITRRQSTEIRLGNLTIGGSAPISVQSMTKTDTRNIPATIAQIKELEECGCEIIRLAIPDMEAASALKSIRPKVKIPIVADIHFDYRLALASLSAGVDGLRLNPGNIGDPERVKAVVKSAKEREIPIRIGVNAGSLPKDLPPELTIAQKMVKAAMGHIKILEGLDFGLIKVSLKAFDVPTTIEAYTQIASLIPYPLHVGITETGTPKTGLVRSAVGIGNLLYMGIGDTIRVSLTAPPHEEVFAAYEILKSLNLRQRGPILVSCPTCSRTEVDIVGIASQVQEALNKIDKPIRVAVMGCAVNGPGEAKEADLGIACGKGQGLLFRKGEKIAVVPEDELVDALLREIASL.

4 residues coordinate [4Fe-4S] cluster: cysteine 263, cysteine 266, cysteine 298, and glutamate 305.

The protein belongs to the IspG family. [4Fe-4S] cluster is required as a cofactor.

The catalysed reaction is (2E)-4-hydroxy-3-methylbut-2-enyl diphosphate + oxidized [flavodoxin] + H2O + 2 H(+) = 2-C-methyl-D-erythritol 2,4-cyclic diphosphate + reduced [flavodoxin]. Its pathway is isoprenoid biosynthesis; isopentenyl diphosphate biosynthesis via DXP pathway; isopentenyl diphosphate from 1-deoxy-D-xylulose 5-phosphate: step 5/6. Converts 2C-methyl-D-erythritol 2,4-cyclodiphosphate (ME-2,4cPP) into 1-hydroxy-2-methyl-2-(E)-butenyl 4-diphosphate. The chain is 4-hydroxy-3-methylbut-2-en-1-yl diphosphate synthase (flavodoxin) from Dehalococcoides mccartyi (strain ATCC BAA-2100 / JCM 16839 / KCTC 5957 / BAV1).